The sequence spans 263 residues: 4-hydroxy-2-oxo-heptane-1,7-dioate aldolase (263 aa).

Catalysis depends on histidine 45, which acts as the Proton acceptor. Glutamine 147 contributes to the substrate binding site. Position 149 (glutamate 149) interacts with a divalent metal cation. Substrate-binding residues include alanine 174 and aspartate 175. An a divalent metal cation-binding site is contributed by aspartate 175.

Belongs to the HpcH/HpaI aldolase family. Homohexamer; trimer of dimers. It depends on a divalent metal cation as a cofactor.

The catalysed reaction is 4-hydroxy-2-oxoheptanedioate = succinate semialdehyde + pyruvate. Its pathway is aromatic compound metabolism; 4-hydroxyphenylacetate degradation; pyruvate and succinate semialdehyde from 4-hydroxyphenylacetate: step 7/7. Catalyzes the reversible retro-aldol cleavage of 4-hydroxy-2-ketoheptane-1,7-dioate (HKHD) to pyruvate and succinic semialdehyde. In Salmonella arizonae (strain ATCC BAA-731 / CDC346-86 / RSK2980), this protein is 4-hydroxy-2-oxo-heptane-1,7-dioate aldolase.